Consider the following 168-residue polypeptide: Diphosphoinositol polyphosphate phosphohydrolase 1 (168 aa).

Position 1 is an N-acetylmethionine (M1). Residues R10, 18 to 20 (KKR), and 39 to 41 (SSR) contribute to the substrate site. A Nudix hydrolase domain is found at 17–144 (YKKRAACLCF…VQASYFETLR (128 aa)). Residues G50 and E66 each coordinate Mg(2+). Residues 51 to 72 (GGMEPEEEPSVAAVREVCEEAG) carry the Nudix box motif. Residue E69 is the Proton acceptor of the active site. E70 contributes to the Mg(2+) binding site. Substrate-binding positions include 89 to 91 (RKH), R115, and K133.

Belongs to the Nudix hydrolase family. DIPP subfamily. In terms of assembly, monomer. It depends on Mg(2+) as a cofactor. Mn(2+) is required as a cofactor. Requires Zn(2+) as cofactor. In terms of tissue distribution, present in heart, lung, liver and spleen (at protein level). Widely expressed.

The protein localises to the cytoplasm. It localises to the nucleus. It catalyses the reaction diphospho-myo-inositol polyphosphate + H2O = myo-inositol polyphosphate + phosphate.. The enzyme catalyses 5-diphospho-1D-myo-inositol 1,2,3,4,6-pentakisphosphate + H2O = 1D-myo-inositol hexakisphosphate + phosphate + H(+). It carries out the reaction 3,5-bis(diphospho)-1D-myo-inositol 1,2,4,6-tetrakisphosphate + H2O = 3-diphospho-1D-myo-inositol 1,2,4,5,6-pentakisphosphate + phosphate + 2 H(+). The catalysed reaction is [phosphate](n+1) + n H2O = (n+1) phosphate + n H(+). It catalyses the reaction P(1),P(5)-bis(5'-adenosyl) pentaphosphate + H2O = ADP + ATP + 2 H(+). The enzyme catalyses P(1),P(6)-bis(5'-adenosyl) hexaphosphate + H2O = 2 ATP + 2 H(+). It carries out the reaction P(1),P(4)-bis(5'-adenosyl) tetraphosphate + H2O = AMP + ATP + 2 H(+). The catalysed reaction is a 5'-end (N(7)-methyl 5'-triphosphoguanosine)-ribonucleoside in mRNA + H2O = N(7)-methyl-GMP + a 5'-end diphospho-ribonucleoside in mRNA + 2 H(+). It catalyses the reaction a 5'-end (N(7)-methyl 5'-triphosphoguanosine)-ribonucleoside in mRNA + H2O = N(7)-methyl-GDP + a 5'-end phospho-ribonucleoside in mRNA + 2 H(+). Functionally, cleaves a beta-phosphate from the diphosphate groups in PP-InsP5 (diphosphoinositol pentakisphosphate) and [PP]2-InsP4 (bisdiphosphoinositol tetrakisphosphate), suggesting that it may play a role in signal transduction. InsP6 (inositol hexakisphosphate) is not a substrate. Also able to catalyze the hydrolysis of dinucleoside oligophosphates, with diadenosine 5',5'''-P1,P6-hexaphosphate (Ap6A) and diadenosine 5',5'''- P1,P5-pentaphosphate (Ap5A) being the preferred substrates. The major reaction products are ADP and p4a from Ap6A and ADP and ATP from Ap5A. Also able to hydrolyze 5- phosphoribose 1-diphosphate. Acts as a negative regulator of the ERK1/2 pathway. Acts as a decapping enzyme that can hydrolyze both monomethylated and unmethylated capped RNAs. Hydrolyzes monomethylated capped RNA after both the alpha- and beta-phosphates generating m7GMP + ppRNA and m7GDP + pRNA. Modulates the stability of a subset of mRNAs implicated in cell motility. Divalent cations zinc, magnesium and manganese determine its substrate specificity. Exhibits diphosphoinositol polyphosphate phosphohydrolase in the presence of magnesium ions, diadenosine hexaphosphate hydrolase activity in the presence of manganese ions and endopolyphosphatase activity in the presence of zinc ions. Plays an important role in limiting DNA damage and maintaining cell survival upon oxidative stress via its endopolyphosphatase activity. The sequence is that of Diphosphoinositol polyphosphate phosphohydrolase 1 from Mus musculus (Mouse).